Here is an 84-residue protein sequence, read N- to C-terminus: Beta-mammal/insect toxin Ts1 (84 aa).

The signal sequence occupies residues 1-20; that stretch reads MKGMILFISCLLLIGIVVEC. Residues 21 to 82 form the LCN-type CS-alpha/beta domain; sequence KEGYLMDHEG…VWDRATNKCG (62 aa). Intrachain disulfides connect Cys-31–Cys-81, Cys-35–Cys-57, Cys-43–Cys-62, and Cys-47–Cys-64. A Cysteine amide modification is found at Cys-81.

Belongs to the long (4 C-C) scorpion toxin superfamily. Sodium channel inhibitor family. In terms of processing, C-terminal amidation is important for high activity. As to expression, expressed by the venom gland.

It is found in the secreted. Voltage-gated sodium channels (Nav) gating-modifier. Acts both as alpha- and beta-toxin, since it affects not only activation but also inactivation of Nav channels. Binds to Nav domain DII and impairs the four Nav channel voltage sensors movements. Depending on Nav channel subtypes tested, can also bind Nav domains DIII (low affinity) and DIV (very low affinity). Acts on almost all the Nav channels tested (mammalian Nav1.2/SCN2A, Nav1.3/SCN3A, Nav1.4/SCN4A, Nav1.5/SCN5A, Nav1.6/SCN8A, Nav1.9/SCN11A, and insect DmNav1). Is highly active against both mammals and insects. Irreversibly modulates DmNav channels. Other Ts1 activities have been studied, such as immunomodulation, antimicrobial activity or exocrine secretion. This toxin exhibits an antifungal activity against filamentous fungi. In vitro, it has an important immunomodulatory effect on macrophages by stimulating the release of pro-inflammatory cytokines. It also shows an activity in exocrine secretion in pancreas, stomach and adrenal gland. This Tityus serrulatus (Brazilian scorpion) protein is Beta-mammal/insect toxin Ts1.